The chain runs to 214 residues: Thymidylate kinase (214 aa).

ATP is bound at residue 7 to 14; sequence GVDGAGKR. Positions 9, 39, 70, 74, 95, 100, and 103 each coordinate dTMP. Asp-9 lines the Mg(2+) pocket. Positions 147-159 are LID; it reads GERSRGRAQRDPG. DTMP contacts are provided by Asp-163 and Tyr-165. Glu-166 contributes to the Mg(2+) binding site.

Belongs to the thymidylate kinase family. In terms of assembly, homodimer. The cofactor is Mg(2+).

The catalysed reaction is dTMP + ATP = dTDP + ADP. It functions in the pathway pyrimidine metabolism; dTTP biosynthesis. Functionally, catalyzes the reversible phosphorylation of deoxythymidine monophosphate (dTMP) to deoxythymidine diphosphate (dTDP), using ATP as its preferred phosphoryl donor. Situated at the junction of both de novo and salvage pathways of deoxythymidine triphosphate (dTTP) synthesis, is essential for DNA synthesis and cellular growth. In Mycobacterium tuberculosis (strain CDC 1551 / Oshkosh), this protein is Thymidylate kinase (tmk).